Consider the following 340-residue polypeptide: MLDPRARTLLKTLIERYIADGQPVGSRTLSRYSGLELSPATIRNVMSDLEELGLVSSPHTSAGRVPTPRGYRLFVDTMLTVEAPIDAEAVARQVQNTLQAGEPQQRVVAAAASVLSNLSQFAGVVLTPRRSHVFKQIEFMRLSDKRILLIIVTPEGDVQNRMLATPRDYSPSQLTEASNYINAHFAGLSFDEVRRRLRDEIDQLRGDMTTLMHAAVTASTEVPDTEDTVLISGERNLLEVADLSSDMARLRKLFDVFDQKTGLLQLLDVSSHAQGVQIFIGGESTLVPIEEMSVVTAPYEVNGQIVGTLGVIGPTRMAYNRVIPIVDITARLLSLTLSQQ.

It belongs to the HrcA family.

Negative regulator of class I heat shock genes (grpE-dnaK-dnaJ and groELS operons). Prevents heat-shock induction of these operons. The polypeptide is Heat-inducible transcription repressor HrcA (Burkholderia cenocepacia (strain HI2424)).